Reading from the N-terminus, the 172-residue chain is Ribosome maturation factor RimM (172 aa).

The PRC barrel domain maps to 98–171 (PGEYYYHQIV…KVIVELMEGL (74 aa)).

It belongs to the RimM family. Binds ribosomal protein uS19.

It localises to the cytoplasm. In terms of biological role, an accessory protein needed during the final step in the assembly of 30S ribosomal subunit, possibly for assembly of the head region. Essential for efficient processing of 16S rRNA. May be needed both before and after RbfA during the maturation of 16S rRNA. It has affinity for free ribosomal 30S subunits but not for 70S ribosomes. This is Ribosome maturation factor RimM from Levilactobacillus brevis (strain ATCC 367 / BCRC 12310 / CIP 105137 / JCM 1170 / LMG 11437 / NCIMB 947 / NCTC 947) (Lactobacillus brevis).